A 205-amino-acid polypeptide reads, in one-letter code: Non-specific lipid transfer protein GPI-anchored 13 (205 aa).

Residues 1 to 24 (MESRKIKVMATAIALIMVAMVVDA) form the signal peptide. 4 disulfides stabilise this stretch: C36–C77, C46–C61, C62–C104, and C75–C113. Residues N93, N137, and N165 are each glycosylated (N-linked (GlcNAc...) asparagine). The disordered stretch occupies residues 141-176 (SASAPTGSASEPTSMSSTPGSSAGNNSGRTTSVPGT). The GPI-anchor amidated asparagine moiety is linked to residue N177. The propeptide at 178 to 205 (HAQSFSKQWLGLEVVAHFFVIFYIFILV) is removed in mature form.

This sequence belongs to the plant LTP family. In terms of tissue distribution, expressed preferentially in expanding leaves and sepals, restricted to the distal side. Expressed at low levels in roots and stems.

It is found in the cell membrane. Probable lipid transfer protein. The chain is Non-specific lipid transfer protein GPI-anchored 13 from Arabidopsis thaliana (Mouse-ear cress).